The primary structure comprises 195 residues: 3-isopropylmalate dehydratase small subunit (195 aa).

This sequence belongs to the LeuD family. LeuD type 1 subfamily. Heterodimer of LeuC and LeuD.

The enzyme catalyses (2R,3S)-3-isopropylmalate = (2S)-2-isopropylmalate. It functions in the pathway amino-acid biosynthesis; L-leucine biosynthesis; L-leucine from 3-methyl-2-oxobutanoate: step 2/4. In terms of biological role, catalyzes the isomerization between 2-isopropylmalate and 3-isopropylmalate, via the formation of 2-isopropylmaleate. This Thermobifida fusca (strain YX) protein is 3-isopropylmalate dehydratase small subunit.